We begin with the raw amino-acid sequence, 284 residues long: Plastid-lipid-associated protein 6, chloroplastic (284 aa).

Residues 1–11 are compositionally biased toward low complexity; the sequence is MATSSTFSSLL. Positions 1–47 are disordered; that stretch reads MATSSTFSSLLPSPPALLSDHRSPPPSIRYSFSPLTTPKSSRLGFTV. The transit peptide at 1–72 directs the protein to the chloroplast; that stretch reads MATSSTFSSL…SIGGESDPPP (72 aa). S96, S105, S148, S151, and S155 each carry phosphoserine.

The protein belongs to the PAP/fibrillin family. Part of the Photosystem II light-harvesting complex (LHCII). Post-translationally, phosphorylated as part of a basal defense response.

It localises to the plastid. Its subcellular location is the chloroplast. The protein localises to the plastoglobule. Its function is as follows. Required for plastoglobule development and resistance to multiple stresses. Regulates plastoglobule osmiophilic content. May be involved in the transport of lipophilic antioxidants in and out of the plastoglobule. This is Plastid-lipid-associated protein 6, chloroplastic from Arabidopsis thaliana (Mouse-ear cress).